A 601-amino-acid chain; its full sequence is Membrane protein insertase YidC (601 aa).

Residues 10-30 (ISISLVILVLFQVIASYVLPP) form a helical membrane-spanning segment. Positions 34-63 (APPHPATQTAQTQPVSGQPAPGVPAPSAVP) are disordered. The segment covering 39–53 (ATQTAQTQPVSGQPA) has biased composition (low complexity). The segment covering 54–63 (PGVPAPSAVP) has biased composition (pro residues). Helical transmembrane passes span 382–404 (FGNM…FPLV), 455–475 (LPML…FISI), 510–530 (ALSP…TMWG), and 549–569 (FMPV…VLYY).

This sequence belongs to the OXA1/ALB3/YidC family. Type 1 subfamily. In terms of assembly, interacts with the Sec translocase complex via SecD. Specifically interacts with transmembrane segments of nascent integral membrane proteins during membrane integration.

The protein localises to the cell inner membrane. Its function is as follows. Required for the insertion and/or proper folding and/or complex formation of integral membrane proteins into the membrane. Involved in integration of membrane proteins that insert both dependently and independently of the Sec translocase complex, as well as at least some lipoproteins. Aids folding of multispanning membrane proteins. The protein is Membrane protein insertase YidC of Acidiphilium cryptum (strain JF-5).